Reading from the N-terminus, the 863-residue chain is Penicillin-binding protein 1A (863 aa).

The Cytoplasmic portion of the chain corresponds to 1-28 (MTENRDNKTSQSEKTTQKKKKKKFKAFK). The helical; Signal-anchor for type II membrane protein transmembrane segment at 29-49 (IILITFITLIVISLVTAIGIT) threads the bilayer. Residues 50–863 (LAIIKTSPDI…KPIIRPKKHF (814 aa)) lie on the Extracellular side of the membrane. Residues 71–248 (SKIYDDKGEL…PSVYYPYSRT (178 aa)) form a transglycosylase region. E110 serves as the catalytic Proton donor; for transglycosylase activity. The interval 392–674 (ASAVLTDYHT…AAALFGKIMN (283 aa)) is transpeptidase. S431 (acyl-ester intermediate; for transpeptidase activity) is an active-site residue. A disordered region spans residues 774-863 (DDDMYVLPDK…KPIIRPKKHF (90 aa)). Over residues 808-836 (EDATNEASTEPSPNTDTVPEDSTNNLDPT) the composition is skewed to polar residues. Over residues 837–846 (KNTEKKPSDK) the composition is skewed to basic and acidic residues. The segment covering 847–863 (KNKKHVIKPIIRPKKHF) has biased composition (basic residues).

In the N-terminal section; belongs to the glycosyltransferase 51 family. This sequence in the C-terminal section; belongs to the transpeptidase family.

Its subcellular location is the cell membrane. It carries out the reaction [GlcNAc-(1-&gt;4)-Mur2Ac(oyl-L-Ala-gamma-D-Glu-L-Lys-D-Ala-D-Ala)](n)-di-trans,octa-cis-undecaprenyl diphosphate + beta-D-GlcNAc-(1-&gt;4)-Mur2Ac(oyl-L-Ala-gamma-D-Glu-L-Lys-D-Ala-D-Ala)-di-trans,octa-cis-undecaprenyl diphosphate = [GlcNAc-(1-&gt;4)-Mur2Ac(oyl-L-Ala-gamma-D-Glu-L-Lys-D-Ala-D-Ala)](n+1)-di-trans,octa-cis-undecaprenyl diphosphate + di-trans,octa-cis-undecaprenyl diphosphate + H(+). The catalysed reaction is Preferential cleavage: (Ac)2-L-Lys-D-Ala-|-D-Ala. Also transpeptidation of peptidyl-alanyl moieties that are N-acyl substituents of D-alanine.. It functions in the pathway cell wall biogenesis; peptidoglycan biosynthesis. In terms of biological role, cell wall formation. Synthesis of cross-linked peptidoglycan from the lipid intermediates. The enzyme has a penicillin-insensitive transglycosylase N-terminal domain (formation of linear glycan strands) and a penicillin-sensitive transpeptidase C-terminal domain (cross-linking of the peptide subunits). This Clostridium novyi (strain NT) protein is Penicillin-binding protein 1A (pbpA).